We begin with the raw amino-acid sequence, 98 residues long: NADH-ubiquinone oxidoreductase chain 4L (98 aa).

3 helical membrane passes run 2 to 22, 29 to 49, and 61 to 81; these read PSIS…MLVF, SLLC…LFIM, and ILLL…LVMV.

This sequence belongs to the complex I subunit 4L family. As to quaternary structure, core subunit of respiratory chain NADH dehydrogenase (Complex I) which is composed of 45 different subunits.

It localises to the mitochondrion inner membrane. It catalyses the reaction a ubiquinone + NADH + 5 H(+)(in) = a ubiquinol + NAD(+) + 4 H(+)(out). In terms of biological role, core subunit of the mitochondrial membrane respiratory chain NADH dehydrogenase (Complex I) which catalyzes electron transfer from NADH through the respiratory chain, using ubiquinone as an electron acceptor. Part of the enzyme membrane arm which is embedded in the lipid bilayer and involved in proton translocation. This is NADH-ubiquinone oxidoreductase chain 4L (MT-ND4L) from Lepilemur sahamalazensis (Sahamalaza sportive lemur).